Reading from the N-terminus, the 265-residue chain is Anamorsin homolog 1 (265 aa).

Residues 1-143 (MAATVAEALA…KVSWSLGSSF (143 aa)) are N-terminal SAM-like domain. Positions 144–175 (PLKKATKGLPKIQIDDDSELIDEDSLLTEDDL) are linker. [2Fe-2S] cluster is bound by residues Cys-186, Cys-195, Cys-198, and Cys-200. Positions 186–200 (CEVGATRKACKNCTC) are fe-S binding site A. 4 residues coordinate [4Fe-4S] cluster: Cys-226, Cys-229, Cys-237, and Cys-240. Short sequence motifs (cx2C motif) lie at residues 226–229 (CGNC) and 237–240 (CGTC). The fe-S binding site B stretch occupies residues 226–240 (CGNCGLGDAFRCGTC).

Belongs to the anamorsin family. Monomer. Requires [2Fe-2S] cluster as cofactor. It depends on [4Fe-4S] cluster as a cofactor.

The protein resides in the cytoplasm. It is found in the mitochondrion intermembrane space. Its function is as follows. Component of the cytosolic iron-sulfur (Fe-S) protein assembly (CIA) machinery. Required for the maturation of extramitochondrial Fe-S proteins. Part of an electron transfer chain functioning in an early step of cytosolic Fe-S biogenesis, facilitating the de novo assembly of a [4Fe-4S] cluster on the cytosolic Fe-S scaffold complex. Electrons are transferred from NADPH via a FAD- and FMN-containing diflavin oxidoreductase. Together with the diflavin oxidoreductase, also required for the assembly of the diferric tyrosyl radical cofactor of ribonucleotide reductase (RNR), probably by providing electrons for reduction during radical cofactor maturation in the catalytic small subunit. The sequence is that of Anamorsin homolog 1 from Oryza sativa subsp. japonica (Rice).